A 515-amino-acid chain; its full sequence is Kelch repeat protein M-T8 (515 aa).

In terms of domain architecture, BTB spans 16-82 (CDVEIVAEGK…MYTESIELHK (67 aa)). Kelch repeat units follow at residues 280 to 326 (VLYF…AIGG), 328 to 374 (IYII…CYKN), 376 to 423 (IWVL…VYKE), 424 to 471 (RLYC…VYND), and 473 to 512 (LYVFGGTDTFTSERYNGVIWKRANDVSCHFATMNAAYATY).

The protein belongs to the poxviruses Kelch family.

The protein is Kelch repeat protein M-T8 of Oryctolagus cuniculus (Rabbit).